A 106-amino-acid chain; its full sequence is Large ribosomal subunit protein eL42 (106 aa).

It belongs to the eukaryotic ribosomal protein eL42 family.

This Eremothecium gossypii (strain ATCC 10895 / CBS 109.51 / FGSC 9923 / NRRL Y-1056) (Yeast) protein is Large ribosomal subunit protein eL42 (RPL44).